The sequence spans 103 residues: Large ribosomal subunit protein eL21 (103 aa).

This sequence belongs to the eukaryotic ribosomal protein eL21 family.

This chain is Large ribosomal subunit protein eL21, found in Sulfolobus acidocaldarius (strain ATCC 33909 / DSM 639 / JCM 8929 / NBRC 15157 / NCIMB 11770).